We begin with the raw amino-acid sequence, 368 residues long: 3-dehydroquinate synthase (368 aa).

Residues 69-74 (DGEAYK), 103-107 (GVIGD), 127-128 (TT), Lys140, and Lys149 each bind NAD(+). Residues Glu182, His245, and His262 each coordinate Zn(2+).

It belongs to the sugar phosphate cyclases superfamily. Dehydroquinate synthase family. NAD(+) is required as a cofactor. Requires Co(2+) as cofactor. It depends on Zn(2+) as a cofactor.

The protein resides in the cytoplasm. The catalysed reaction is 7-phospho-2-dehydro-3-deoxy-D-arabino-heptonate = 3-dehydroquinate + phosphate. The protein operates within metabolic intermediate biosynthesis; chorismate biosynthesis; chorismate from D-erythrose 4-phosphate and phosphoenolpyruvate: step 2/7. In terms of biological role, catalyzes the conversion of 3-deoxy-D-arabino-heptulosonate 7-phosphate (DAHP) to dehydroquinate (DHQ). In Pseudomonas aeruginosa (strain ATCC 15692 / DSM 22644 / CIP 104116 / JCM 14847 / LMG 12228 / 1C / PRS 101 / PAO1), this protein is 3-dehydroquinate synthase.